Consider the following 507-residue polypeptide: Probable Xaa-Pro aminopeptidase HCBG_01484 (507 aa).

Aspartate 283, aspartate 294, glutamate 431, and glutamate 469 together coordinate Mn(2+).

It belongs to the peptidase M24B family. Mn(2+) serves as cofactor.

The catalysed reaction is Release of any N-terminal amino acid, including proline, that is linked to proline, even from a dipeptide or tripeptide.. Its function is as follows. Catalyzes the removal of a penultimate prolyl residue from the N-termini of peptides. The sequence is that of Probable Xaa-Pro aminopeptidase HCBG_01484 from Ajellomyces capsulatus (strain G186AR / H82 / ATCC MYA-2454 / RMSCC 2432) (Darling's disease fungus).